The sequence spans 556 residues: 2-succinyl-5-enolpyruvyl-6-hydroxy-3-cyclohexene-1-carboxylate synthase (556 aa).

This sequence belongs to the TPP enzyme family. MenD subfamily. Homodimer. It depends on Mg(2+) as a cofactor. The cofactor is Mn(2+). Thiamine diphosphate serves as cofactor.

The enzyme catalyses isochorismate + 2-oxoglutarate + H(+) = 5-enolpyruvoyl-6-hydroxy-2-succinyl-cyclohex-3-ene-1-carboxylate + CO2. It participates in quinol/quinone metabolism; 1,4-dihydroxy-2-naphthoate biosynthesis; 1,4-dihydroxy-2-naphthoate from chorismate: step 2/7. Its pathway is quinol/quinone metabolism; menaquinone biosynthesis. Functionally, catalyzes the thiamine diphosphate-dependent decarboxylation of 2-oxoglutarate and the subsequent addition of the resulting succinic semialdehyde-thiamine pyrophosphate anion to isochorismate to yield 2-succinyl-5-enolpyruvyl-6-hydroxy-3-cyclohexene-1-carboxylate (SEPHCHC). In Klebsiella pneumoniae subsp. pneumoniae (strain ATCC 700721 / MGH 78578), this protein is 2-succinyl-5-enolpyruvyl-6-hydroxy-3-cyclohexene-1-carboxylate synthase.